The chain runs to 1520 residues: Glutamate synthase [NADPH] large chain (1520 aa).

C22 acts as the For GATase activity in catalysis. The region spanning 22 to 415 is the Glutamine amidotransferase type-2 domain; that stretch reads CGIGLYAHLK…PGKMLLIDLE (394 aa). Residues 890–913 are disordered; the sequence is GGKSNSGEGGEDPKRFVPDENGDD. Residues 900–913 are compositionally biased toward basic and acidic residues; it reads EDPKRFVPDENGDD. Position 1060 to 1112 (1060 to 1112) interacts with FMN; the sequence is LAEAHQTLMLNGLRDRVVLETDGKLMTGRDVVMAALLGAEEFGFATAPLVVLG. [3Fe-4S] cluster is bound by residues C1113, C1119, and C1124.

The protein belongs to the glutamate synthase family. Aggregate of 4 catalytic active heterodimers, consisting of a large and a small subunit. It depends on [3Fe-4S] cluster as a cofactor. Requires FAD as cofactor. FMN serves as cofactor.

It catalyses the reaction 2 L-glutamate + NADP(+) = L-glutamine + 2-oxoglutarate + NADPH + H(+). Its pathway is amino-acid biosynthesis; L-glutamate biosynthesis via GLT pathway; L-glutamate from 2-oxoglutarate and L-glutamine (NADP(+) route): step 1/1. It participates in energy metabolism; nitrogen metabolism. In Bacillus subtilis (strain 168), this protein is Glutamate synthase [NADPH] large chain (gltA).